We begin with the raw amino-acid sequence, 183 residues long: Ras-related protein Rap-2a (183 aa).

10–17 (GSGGVGKS) is a binding site for GTP. Positions 32–40 (YDPTIEDFY) match the Effector region motif. Residues 57-61 (DTAGT) and 116-119 (NKVD) each bind GTP. Residues Cys-176 and Cys-177 are each lipidated (S-palmitoyl cysteine). Cys-180 is modified (cysteine methyl ester). Residue Cys-180 is the site of S-farnesyl cysteine attachment. A propeptide spans 181 to 183 (NIQ) (removed in mature form).

Belongs to the small GTPase superfamily. Ras family. In terms of assembly, interacts with PLCE1. Interacts with ARHGAP29, SGSM1, SGSM2 and SGSM3. Interacts (GTP-bound form preferentially) with MAP4K4. Interacts with MINK1. Interacts with cytoskeletal actin. Interacts (GTP-bound form) with RUNDC3A. Interacts (GTP-bound form preferentially) with TNIK (via the CNH domain); the interaction is direct and recruits RAP2A to the E3 ubiquitin ligase NEDD4. Interacts with RGS14; the interaction is GTP-dependent. In terms of processing, ubiquitinated; undergoes 'Lys-63' monoubiquitination and diubiquitination by NEDD4. Multiple lysine residues are probably modified. Ubiquitination requires TNIK, prevents interaction with effectors and inactivates RAP2A. Ubiquitination by the ECS(RAB40B) complex leads to RAP2A localization to lamellipodia plasma membrane, activation, and regulation of sorting at early endosomes for recycling to the lamellipodia plasma membrane. Palmitoylated. Palmitoylation is required for association with recycling endosome membranes and activation of TNIK. As to expression, expressed in granular layer of the cerebellum, forebrain, striatum, layer V of the cortex, olfactory cortex, tubercules, subthalamic and hippocampus, particularly in the CA2 region, to a lesser extent in the CA1 region and the external layer of the dentate gyrus. Expressed in neurons.

Its subcellular location is the midbody. The protein resides in the cell projection. It is found in the lamellipodium membrane. The protein localises to the golgi apparatus. It localises to the recycling endosome membrane. Its subcellular location is the lysosome. The catalysed reaction is GTP + H2O = GDP + phosphate + H(+). With respect to regulation, activated by the guanine nucleotide-exchange factors RAPGEF3 and RAPGEF4 in a cAMP-dependent manner. Nucleotide exchange is also specifically stimulated by RAPGEF5, RASGEF1A and RASGEF1B. In terms of biological role, small GTP-binding protein which cycles between a GDP-bound inactive and a GTP-bound active form. In its active form interacts with and regulates several effectors including MAP4K4, MINK1 and TNIK. Part of a signaling complex composed of NEDD4, RAP2A and TNIK which regulates neuronal dendrite extension and arborization during development. More generally, it is part of several signaling cascades and may regulate cytoskeletal rearrangements, cell migration, cell adhesion and cell spreading. The polypeptide is Ras-related protein Rap-2a (Mus musculus (Mouse)).